A 153-amino-acid polypeptide reads, in one-letter code: Histone H2A.Z-specific chaperone CHZ1 (153 aa).

Basic and acidic residues predominate over residues 1–29 (MSDEAKEKRELESQKESSHNKSEKSVEPK). Residues 1-153 (MSDEAKEKRE…EDEEDDDFKE (153 aa)) are disordered. Position 2 is an N-acetylserine (S2). Residues 56 to 65 (LTKSENNGTV) are compositionally biased toward polar residues. 2 positions are modified to phosphoserine: S68 and S70. A compositionally biased stretch (acidic residues) spans 84-94 (EGEEEEDDLAE). An important for H2A.Z-H2B binding region spans residues 87-108 (EEEDDLAEIDTSNIITSGRRTR). A compositionally biased stretch (basic and acidic residues) spans 110–138 (KVIDYKKTAEELDKKEPSTGSKDDVGYGE). Residues 139-153 (KEEDDEDEEDDDFKE) are compositionally biased toward acidic residues.

This sequence belongs to the CHZ1 family. In terms of assembly, forms a heterotrimer with H2A.Z-H2B, stabilizing the association of the histone dimer. Also, with a lower affinity, forms a heterotrimer with H2A-H2B.

Its subcellular location is the nucleus. In terms of biological role, forms a chaperone-bound H2A.Z-H2B complex that acts as a source for SWR1 complex-dependent H2A to H2A.Z histone replacement in chromatin. This chain is Histone H2A.Z-specific chaperone CHZ1 (CHZ1), found in Saccharomyces cerevisiae (strain ATCC 204508 / S288c) (Baker's yeast).